The following is a 188-amino-acid chain: Defensin-like protein 99 (188 aa).

Positions 1-28 (MGSLKLSTVVVTALVVCLSILLISPTEA) are cleaved as a signal peptide. 7 disulfides stabilise this stretch: C37–C95, C45–C77, C58–C92, C62–C94, C123–C178, C137–C175, and C141–C177.

Belongs to the DEFL family.

The protein resides in the secreted. The sequence is that of Defensin-like protein 99 from Arabidopsis thaliana (Mouse-ear cress).